A 122-amino-acid polypeptide reads, in one-letter code: Phosphoribosyl-ATP pyrophosphatase (122 aa).

The protein belongs to the PRA-PH family.

Its subcellular location is the cytoplasm. It catalyses the reaction 1-(5-phospho-beta-D-ribosyl)-ATP + H2O = 1-(5-phospho-beta-D-ribosyl)-5'-AMP + diphosphate + H(+). The protein operates within amino-acid biosynthesis; L-histidine biosynthesis; L-histidine from 5-phospho-alpha-D-ribose 1-diphosphate: step 2/9. The protein is Phosphoribosyl-ATP pyrophosphatase of Cupriavidus metallidurans (strain ATCC 43123 / DSM 2839 / NBRC 102507 / CH34) (Ralstonia metallidurans).